Reading from the N-terminus, the 327-residue chain is uncharacterized protein (327 aa).

Disordered regions lie at residues 127–170 (LSEF…GIYR) and 298–327 (NFED…LKRR). Phosphoserine occurs at positions 153, 154, and 309. The span at 317–327 (YRKRKKNLKRR) shows a compositional bias: basic residues.

This is an uncharacterized protein from Schizosaccharomyces pombe (strain 972 / ATCC 24843) (Fission yeast).